The sequence spans 359 residues: MSTPTLPDMVAPSPRVRVKDRCRRMMGDLRLSVIDQCNLRCRYCMPEEHYTWLPRQDLLSVKEISAIVDVFLSVGVSKVRITGGEPLIRPDLPEIVRTLSAKVGEDSGLRDLAITTNGVLLADRVDGLKAAGMKRITVSLDTLQPERFKAISQRNSHDKVIAGIKAVAAAGFTDTKIDTTVMRGANHDELADLIEFARTVNAEVRFIEYMDVGGATHWAWEKVFTKANMLESLEKRYGRIEPLPKHDTAPANRYALPDGTTFGIIASTTEPFCATCDRSRLTADGLWLHCLYAISGINLREPLRAGATHDDLVETVTTGWRRRTDRGAEQRLAQRERGVFLPLSTLKADPHLEMHTRGG.

A Radical SAM core domain is found at 21–241 (RCRRMMGDLR…SLEKRYGRIE (221 aa)). Arg30 is a GTP binding site. Positions 37 and 41 each coordinate [4Fe-4S] cluster. Residue Tyr43 coordinates S-adenosyl-L-methionine. Cys44 contacts [4Fe-4S] cluster. Residue Arg80 participates in GTP binding. Gly84 contributes to the S-adenosyl-L-methionine binding site. GTP is bound at residue Thr115. Position 139 (Ser139) interacts with S-adenosyl-L-methionine. Lys176 serves as a coordination point for GTP. Met210 lines the S-adenosyl-L-methionine pocket. Residues Cys273 and Cys276 each contribute to the [4Fe-4S] cluster site. 278–280 (RSR) provides a ligand contact to GTP. Cys290 serves as a coordination point for [4Fe-4S] cluster.

It belongs to the radical SAM superfamily. MoaA family. Monomer and homodimer. It depends on [4Fe-4S] cluster as a cofactor.

It catalyses the reaction GTP + AH2 + S-adenosyl-L-methionine = (8S)-3',8-cyclo-7,8-dihydroguanosine 5'-triphosphate + 5'-deoxyadenosine + L-methionine + A + H(+). Its pathway is cofactor biosynthesis; molybdopterin biosynthesis. Its function is as follows. Catalyzes the cyclization of GTP to (8S)-3',8-cyclo-7,8-dihydroguanosine 5'-triphosphate. The chain is GTP 3',8-cyclase 1 from Mycobacterium tuberculosis (strain CDC 1551 / Oshkosh).